The sequence spans 780 residues: ATP-dependent 6-phosphofructokinase, muscle type (780 aa).

Position 2 is an N-acetylthreonine (Thr-2). Positions 2–390 are N-terminal catalytic PFK domain 1; sequence THEEHHAAKT…NWEVYKLLAH (389 aa). ATP-binding positions include Gly-25, 88–89, and 118–121; these read RC and GDGS. Asp-119 contacts Mg(2+). Ser-133 carries the post-translational modification Phosphoserine. Substrate-binding positions include 164-166, Arg-201, 208-210, Glu-264, Arg-292, and 298-301; these read SID, MGR, and HVQR. Asp-166 acts as the Proton acceptor in catalysis. The residue at position 377 (Ser-377) is a Phosphoserine. An interdomain linker region spans residues 391–401; sequence VRPPVSKGGLH. The interval 402–780 is C-terminal regulatory PFK domain 2; it reads TVAVMNVGAP…SRKRSGEAAV (379 aa). Beta-D-fructose 2,6-bisphosphate is bound by residues Arg-471 and 528–532; that span reads TVSNN. A glycan (O-linked (GlcNAc) serine) is linked at Ser-530. Lys-557 carries the post-translational modification N6-(2-hydroxyisobutyryl)lysine. Residues Arg-566, 573-575, Glu-629, Arg-655, and 661-664 each bind beta-D-fructose 2,6-bisphosphate; these read MGG and HMQQ. A Phosphoserine modification is found at Ser-667. Beta-D-fructose 2,6-bisphosphate is bound at residue Arg-735. Phosphoserine is present on Ser-775.

Belongs to the phosphofructokinase type A (PFKA) family. ATP-dependent PFK group I subfamily. Eukaryotic two domain clade 'E' sub-subfamily. Homo- and heterotetramers. Phosphofructokinase (PFK) enzyme functions as a tetramer composed of different combinations of 3 types of subunits, called PFKM (M), PFKL (L) and PFKP (P). The composition of the PFK tetramer differs according to the tissue type it is present in. The kinetic and regulatory properties of the tetrameric enzyme are dependent on the subunit composition, hence can vary across tissues. Isoform 2 and isoform 3 interact (via N-terminal testis-specific region) with GSTM5. Isoform 2 and isoform 3 interact (via C-terminus) with HK1 (via N-terminal spermatogenic cell-specific region). It depends on Mg(2+) as a cofactor. GlcNAcylation decreases enzyme activity. Isoform 1 is expressed in skeletal muscle (at protein level). Isoform 2 and isoform 3 are testis-specific and are detected in quiescent sperm (at protein level). They are first detected in the cytoplasm of round spermatids and subsequently in the flagellum of elongated spermatids extending into the seminiferous tubule lumen (at protein level). Isoform 2 is expressed at higher level than isoform 3 in testis.

Its subcellular location is the cytoplasm. The protein localises to the cell projection. It localises to the cilium. The protein resides in the flagellum. The enzyme catalyses beta-D-fructose 6-phosphate + ATP = beta-D-fructose 1,6-bisphosphate + ADP + H(+). The protein operates within carbohydrate degradation; glycolysis; D-glyceraldehyde 3-phosphate and glycerone phosphate from D-glucose: step 3/4. Its activity is regulated as follows. Allosterically activated by ADP, AMP, or fructose 2,6-bisphosphate, and allosterically inhibited by ATP or citrate. Catalyzes the phosphorylation of D-fructose 6-phosphate to fructose 1,6-bisphosphate by ATP, the first committing step of glycolysis. This Mus musculus (Mouse) protein is ATP-dependent 6-phosphofructokinase, muscle type (Pfkm).